The sequence spans 185 residues: Large ribosomal subunit protein uL22 (185 aa).

A disordered region spans residues 157 to 185 (VAAPTPDEDAPKKKQSKKKMARQKLMQRD). The span at 169-178 (KKQSKKKMAR) shows a compositional bias: basic residues.

Belongs to the universal ribosomal protein uL22 family.

In Argas monolakensis (Mono lake bird tick), this protein is Large ribosomal subunit protein uL22 (RpL17).